Here is a 106-residue protein sequence, read N- to C-terminus: Synaptic plasticity regulator PANTS (106 aa).

A disordered region spans residues 67–106 (LQQSEKTRLEGKQNNSPVWTLRKNPPPDWYLPLDPGKPRQ).

This sequence belongs to the UPF0545 family. Rapidly degraded by proteolysis following neuronal stimulation, resulting in increased AMPA receptor clustering.

The protein localises to the synapse. The protein resides in the synaptic cleft. Negatively regulates long-term potentiation and modulates adult synaptic plasticity. The polypeptide is Synaptic plasticity regulator PANTS (Xenopus laevis (African clawed frog)).